Reading from the N-terminus, the 134-residue chain is ATP synthase epsilon chain (134 aa).

The disordered stretch occupies residues N100–V134. Residues E110–R120 are compositionally biased toward basic and acidic residues.

The protein belongs to the ATPase epsilon chain family. As to quaternary structure, F-type ATPases have 2 components, CF(1) - the catalytic core - and CF(0) - the membrane proton channel. CF(1) has five subunits: alpha(3), beta(3), gamma(1), delta(1), epsilon(1). CF(0) has three main subunits: a, b and c.

The protein localises to the cell inner membrane. Produces ATP from ADP in the presence of a proton gradient across the membrane. The polypeptide is ATP synthase epsilon chain (Sulfurihydrogenibium sp. (strain YO3AOP1)).